The primary structure comprises 185 residues: Ribosome-recycling factor (185 aa).

The protein belongs to the RRF family.

The protein resides in the cytoplasm. In terms of biological role, responsible for the release of ribosomes from messenger RNA at the termination of protein biosynthesis. May increase the efficiency of translation by recycling ribosomes from one round of translation to another. The sequence is that of Ribosome-recycling factor from Clostridium botulinum (strain Eklund 17B / Type B).